A 422-amino-acid chain; its full sequence is NADH-quinone oxidoreductase subunit F (422 aa).

The segment at 1–26 (MLKEEDKIFTNLHGQQSHDLKSSKKR) is disordered. The segment covering 16 to 26 (QSHDLKSSKKR) has biased composition (basic and acidic residues). NAD(+) is bound at residue 54 to 63 (GRGGAGFSTG). 166 to 213 (GAGAYICGEETALLESLEGKKGMPRLKPPFPAGFGLYGCPTTINNVES) is an FMN binding site. Cys344, Cys347, Cys350, and Cys390 together coordinate [4Fe-4S] cluster.

This sequence belongs to the complex I 51 kDa subunit family. FMN is required as a cofactor. [4Fe-4S] cluster serves as cofactor.

The enzyme catalyses a quinone + NADH + 5 H(+)(in) = a quinol + NAD(+) + 4 H(+)(out). Its function is as follows. NDH-1 shuttles electrons from NADH, via FMN and iron-sulfur (Fe-S) centers, to quinones in the respiratory chain. Couples the redox reaction to proton translocation (for every two electrons transferred, four hydrogen ions are translocated across the cytoplasmic membrane), and thus conserves the redox energy in a proton gradient. This chain is NADH-quinone oxidoreductase subunit F (nuoF), found in Rickettsia felis (strain ATCC VR-1525 / URRWXCal2) (Rickettsia azadi).